A 555-amino-acid chain; its full sequence is Polypyrimidine tract-binding protein 1 (555 aa).

Met-1 bears the N-acetylmethionine mark. Position 16 is a phosphoserine (Ser-16). RRM domains lie at 58 to 142 (RVIH…SSPN), 183 to 259 (LRII…FSKL), and 361 to 412 (SVLL…SQAQ). Lys-64 is covalently cross-linked (Glycyl lysine isopeptide (Lys-Gly) (interchain with G-Cter in SUMO2)). Tyr-126 carries the phosphotyrosine modification. Thr-137 carries the phosphothreonine modification. Phosphoserine is present on Ser-140. Lys-217 is covalently cross-linked (Glycyl lysine isopeptide (Lys-Gly) (interchain with G-Cter in SUMO2)). The tract at residues 435–457 (HQSVQLPREGQEDQGLTKDYGSS) is disordered. Ser-457 bears the Phosphoserine mark. The RRM 4 domain occupies 478–553 (ATLHLSNIPP…HHLRVSFSKS (76 aa)).

In terms of assembly, monomer. Part of a ternary complex containing KHSRP, PTBP1, PTBP2 and HNRPH1. Interacts with SFPQ. Interacts with RAVER1. Interacts with IVNS1ABP (via BACK domain); the interaction is direct. As to expression, expressed in myoblast; expression gradually decreases during muscle cell differentiation (at protein level).

The protein resides in the nucleus. In terms of biological role, plays a role in pre-mRNA splicing and in the regulation of alternative splicing events. Activates exon skipping of its own pre-mRNA during muscle cell differentiation. Binds to the polypyrimidine tract of introns. May promote RNA looping when bound to two separate polypyrimidine tracts in the same pre-mRNA. May promote the binding of U2 snRNP to pre-mRNA. Cooperates with RAVER1 to modulate switching between mutually exclusive exons during maturation of the TPM1 pre-mRNA. Represses the splicing of MAPT/Tau exon 10. Binds to polypyrimidine-rich controlling element (PCE) of CFTR and promotes exon skipping of CFTR exon 9, thereby antagonizing TIA1 and its role in exon inclusion of CFTR exon 9. Plays a role in the splicing of pyruvate kinase PKM by binding repressively to a polypyrimidine tract flanking PKM exon 9, inhibiting exon 9 inclusion and resulting in exon 10 inclusion and production of the PKM M2 isoform. This Mus musculus (Mouse) protein is Polypyrimidine tract-binding protein 1 (Ptbp1).